Here is a 645-residue protein sequence, read N- to C-terminus: Threonine--tRNA ligase (645 aa).

In terms of domain architecture, TGS spans 1–63; that stretch reads MEQINIQFPD…ETDGSIGIVT (63 aa). Residues 242–540 are catalytic; it reads DHRKIGKELE…LTEETKGAFP (299 aa). The Zn(2+) site is built by cysteine 336, histidine 387, and histidine 517.

This sequence belongs to the class-II aminoacyl-tRNA synthetase family. As to quaternary structure, homodimer. The cofactor is Zn(2+).

It is found in the cytoplasm. The catalysed reaction is tRNA(Thr) + L-threonine + ATP = L-threonyl-tRNA(Thr) + AMP + diphosphate + H(+). Its function is as follows. Catalyzes the attachment of threonine to tRNA(Thr) in a two-step reaction: L-threonine is first activated by ATP to form Thr-AMP and then transferred to the acceptor end of tRNA(Thr). Also edits incorrectly charged L-seryl-tRNA(Thr). This chain is Threonine--tRNA ligase, found in Staphylococcus aureus (strain Mu3 / ATCC 700698).